We begin with the raw amino-acid sequence, 157 residues long: SsrA-binding protein (157 aa).

A disordered region spans residues 130–157 (KAEHDKRDTIKEREGKREVERVMKSRHR).

The protein belongs to the SmpB family.

Its subcellular location is the cytoplasm. Its function is as follows. Required for rescue of stalled ribosomes mediated by trans-translation. Binds to transfer-messenger RNA (tmRNA), required for stable association of tmRNA with ribosomes. tmRNA and SmpB together mimic tRNA shape, replacing the anticodon stem-loop with SmpB. tmRNA is encoded by the ssrA gene; the 2 termini fold to resemble tRNA(Ala) and it encodes a 'tag peptide', a short internal open reading frame. During trans-translation Ala-aminoacylated tmRNA acts like a tRNA, entering the A-site of stalled ribosomes, displacing the stalled mRNA. The ribosome then switches to translate the ORF on the tmRNA; the nascent peptide is terminated with the 'tag peptide' encoded by the tmRNA and targeted for degradation. The ribosome is freed to recommence translation, which seems to be the essential function of trans-translation. This is SsrA-binding protein from Acidovorax sp. (strain JS42).